The sequence spans 395 residues: GDP-mannose 4,6 dehydratase (395 aa).

Composition is skewed to polar residues over residues 1–13 and 24–36; these read MLNTRLIAMSTSD and ESSSNGSKDQNGT. The interval 1–44 is disordered; sequence MLNTRLIAMSTSDGAPETKKQRPESSSNGSKDQNGTEAGAEGDS. NADP(+) is bound by residues 53-58, 109-110, 131-135, and tyrosine 146; these read GITGQD, DM, and LAAQS. Threonine 178 is an active-site residue. Residues glutamate 180 and tyrosine 202 each act as nucleophile in the active site. NADP(+)-binding residues include lysine 206, histidine 232, and arginine 237.

Belongs to the NAD(P)-dependent epimerase/dehydratase family. GDP-mannose 4,6-dehydratase subfamily. NADP(+) serves as cofactor.

It carries out the reaction GDP-alpha-D-mannose = GDP-4-dehydro-alpha-D-rhamnose + H2O. It participates in nucleotide-sugar biosynthesis; GDP-L-fucose biosynthesis via de novo pathway; GDP-L-fucose from GDP-alpha-D-mannose: step 1/2. Its function is as follows. Catalyzes the conversion of GDP-D-mannose to GDP-4-dehydro-6-deoxy-D-mannose (also known as GDP-4-keto-6-deoxy-D-mannose or GDP-4-dehydro-alpha-D-rhamnose), an essential step in the synthesis of GDP-fucose from GDP-mannose. The chain is GDP-mannose 4,6 dehydratase (Gmd) from Drosophila melanogaster (Fruit fly).